A 161-amino-acid polypeptide reads, in one-letter code: 2-C-methyl-D-erythritol 2,4-cyclodiphosphate synthase (161 aa).

Asp-8 and His-10 together coordinate a divalent metal cation. Residues 8–10 (DLH) and 34–35 (HS) each bind 4-CDP-2-C-methyl-D-erythritol 2-phosphate. An a divalent metal cation-binding site is contributed by His-42. 4-CDP-2-C-methyl-D-erythritol 2-phosphate-binding positions include 56–58 (DIG), 100–106 (AEYPKML), and Arg-142.

Belongs to the IspF family. In terms of assembly, homotrimer. The cofactor is a divalent metal cation.

It catalyses the reaction 4-CDP-2-C-methyl-D-erythritol 2-phosphate = 2-C-methyl-D-erythritol 2,4-cyclic diphosphate + CMP. Its pathway is isoprenoid biosynthesis; isopentenyl diphosphate biosynthesis via DXP pathway; isopentenyl diphosphate from 1-deoxy-D-xylulose 5-phosphate: step 4/6. In terms of biological role, involved in the biosynthesis of isopentenyl diphosphate (IPP) and dimethylallyl diphosphate (DMAPP), two major building blocks of isoprenoid compounds. Catalyzes the conversion of 4-diphosphocytidyl-2-C-methyl-D-erythritol 2-phosphate (CDP-ME2P) to 2-C-methyl-D-erythritol 2,4-cyclodiphosphate (ME-CPP) with a corresponding release of cytidine 5-monophosphate (CMP). The sequence is that of 2-C-methyl-D-erythritol 2,4-cyclodiphosphate synthase from Buchnera aphidicola subsp. Acyrthosiphon pisum (strain 5A).